A 223-amino-acid polypeptide reads, in one-letter code: Cytidylate kinase (223 aa).

10 to 18 (GPASSGKST) is an ATP binding site.

It belongs to the cytidylate kinase family. Type 1 subfamily.

It localises to the cytoplasm. It carries out the reaction CMP + ATP = CDP + ADP. It catalyses the reaction dCMP + ATP = dCDP + ADP. The chain is Cytidylate kinase from Streptococcus pneumoniae (strain Hungary19A-6).